The sequence spans 249 residues: CDP-diacylglycerol pyrophosphatase (249 aa).

The helical transmembrane segment at 7–27 (FLLAVVIVAAVAGIGYWKLAA) threads the bilayer.

Belongs to the Cdh family.

It localises to the cell inner membrane. The enzyme catalyses a CDP-1,2-diacyl-sn-glycerol + H2O = a 1,2-diacyl-sn-glycero-3-phosphate + CMP + 2 H(+). Its pathway is phospholipid metabolism; CDP-diacylglycerol degradation; phosphatidate from CDP-diacylglycerol: step 1/1. This is CDP-diacylglycerol pyrophosphatase from Citrobacter koseri (strain ATCC BAA-895 / CDC 4225-83 / SGSC4696).